The primary structure comprises 376 residues: N-acetyldiaminopimelate deacetylase (376 aa).

The active site involves Asp69. Glu128 functions as the Proton acceptor in the catalytic mechanism.

It belongs to the peptidase M20A family. N-acetyldiaminopimelate deacetylase subfamily.

The enzyme catalyses N-acetyl-(2S,6S)-2,6-diaminopimelate + H2O = (2S,6S)-2,6-diaminopimelate + acetate. It participates in amino-acid biosynthesis; L-lysine biosynthesis via DAP pathway; LL-2,6-diaminopimelate from (S)-tetrahydrodipicolinate (acetylase route): step 3/3. In terms of biological role, catalyzes the conversion of N-acetyl-diaminopimelate to diaminopimelate and acetate. The protein is N-acetyldiaminopimelate deacetylase of Bacillus anthracis (strain A0248).